Consider the following 368-residue polypeptide: Endoglucanase (368 aa).

Residues 1–21 form the signal peptide; sequence MNVLRSGLVTMLLLAAFSVQA. Glu55 acts as the Proton donor in catalysis. The active-site Nucleophile is Asp116.

It belongs to the glycosyl hydrolase 8 (cellulase D) family.

The protein resides in the secreted. It carries out the reaction Endohydrolysis of (1-&gt;4)-beta-D-glucosidic linkages in cellulose, lichenin and cereal beta-D-glucans.. It participates in glycan metabolism; bacterial cellulose biosynthesis. Hydrolyzes carboxymethylcellulose. This chain is Endoglucanase (bcsZ), found in Escherichia coli O157:H7.